A 251-amino-acid chain; its full sequence is Triosephosphate isomerase (251 aa).

8–10 (NWK) serves as a coordination point for substrate. Catalysis depends on His-97, which acts as the Electrophile. Glu-170 serves as the catalytic Proton acceptor. Substrate contacts are provided by residues Gly-176, Ser-215, and 236-237 (GG).

Belongs to the triosephosphate isomerase family. As to quaternary structure, homodimer.

It localises to the cytoplasm. It catalyses the reaction D-glyceraldehyde 3-phosphate = dihydroxyacetone phosphate. Its pathway is carbohydrate biosynthesis; gluconeogenesis. It functions in the pathway carbohydrate degradation; glycolysis; D-glyceraldehyde 3-phosphate from glycerone phosphate: step 1/1. Functionally, involved in the gluconeogenesis. Catalyzes stereospecifically the conversion of dihydroxyacetone phosphate (DHAP) to D-glyceraldehyde-3-phosphate (G3P). The chain is Triosephosphate isomerase from Nitratidesulfovibrio vulgaris (strain ATCC 29579 / DSM 644 / CCUG 34227 / NCIMB 8303 / VKM B-1760 / Hildenborough) (Desulfovibrio vulgaris).